We begin with the raw amino-acid sequence, 578 residues long: Proteasome-associated ATPase (578 aa).

Positions 8–84 (TAAELRNQVR…LKEEVDRLAQ (77 aa)) form a coiled coil. 267-272 (GCGKTL) contributes to the ATP binding site. A docks into pockets in the proteasome alpha-ring region spans residues 577–578 (YL).

It belongs to the AAA ATPase family. Homohexamer. Assembles into a hexameric ring structure that caps the 20S proteasome core. Strongly interacts with the prokaryotic ubiquitin-like protein Pup through a hydrophobic interface; the interacting region of ARC lies in its N-terminal coiled-coil domain. There is one Pup binding site per ARC hexamer ring. Upon ATP-binding, the C-terminus of ARC interacts with the alpha-rings of the proteasome core, possibly by binding to the intersubunit pockets.

It functions in the pathway protein degradation; proteasomal Pup-dependent pathway. Its function is as follows. ATPase which is responsible for recognizing, binding, unfolding and translocation of pupylated proteins into the bacterial 20S proteasome core particle. May be essential for opening the gate of the 20S proteasome via an interaction with its C-terminus, thereby allowing substrate entry and access to the site of proteolysis. Thus, the C-termini of the proteasomal ATPase may function like a 'key in a lock' to induce gate opening and therefore regulate proteolysis. The sequence is that of Proteasome-associated ATPase from Kribbella flavida (strain DSM 17836 / JCM 10339 / NBRC 14399).